A 213-amino-acid chain; its full sequence is Pyridoxine/pyridoxamine 5'-phosphate oxidase (213 aa).

Substrate is bound by residues 8–11 (RQEY) and K66. FMN contacts are provided by residues 61–66 (RTVLLK), 76–77 (YT), R82, K83, and Q105. Substrate is bound by residues Y123, R127, and S131. Residues 140–141 (QS) and W185 contribute to the FMN site. 191 to 193 (RLH) provides a ligand contact to substrate. FMN is bound at residue R195.

The protein belongs to the pyridoxamine 5'-phosphate oxidase family. As to quaternary structure, homodimer. FMN serves as cofactor.

It catalyses the reaction pyridoxamine 5'-phosphate + O2 + H2O = pyridoxal 5'-phosphate + H2O2 + NH4(+). The catalysed reaction is pyridoxine 5'-phosphate + O2 = pyridoxal 5'-phosphate + H2O2. It participates in cofactor metabolism; pyridoxal 5'-phosphate salvage; pyridoxal 5'-phosphate from pyridoxamine 5'-phosphate: step 1/1. It functions in the pathway cofactor metabolism; pyridoxal 5'-phosphate salvage; pyridoxal 5'-phosphate from pyridoxine 5'-phosphate: step 1/1. Catalyzes the oxidation of either pyridoxine 5'-phosphate (PNP) or pyridoxamine 5'-phosphate (PMP) into pyridoxal 5'-phosphate (PLP). This is Pyridoxine/pyridoxamine 5'-phosphate oxidase from Bacteroides thetaiotaomicron (strain ATCC 29148 / DSM 2079 / JCM 5827 / CCUG 10774 / NCTC 10582 / VPI-5482 / E50).